Here is a 37-residue protein sequence, read N- to C-terminus: Large ribosomal subunit protein bL36B (37 aa).

Belongs to the bacterial ribosomal protein bL36 family.

This chain is Large ribosomal subunit protein bL36B, found in Paenarthrobacter aurescens (strain TC1).